The chain runs to 1153 residues: Bifunctional dioxygenase (DOX)-epoxy alcohol synthase (EAS) (1153 aa).

Low complexity predominate over residues 46–56; it reads SSKESPSRKSS. The interval 46–113 is disordered; it reads SSKESPSRKS…TQHGDGTYPT (68 aa). The span at 57–74 shows a compositional bias: polar residues; sequence TIGQSTRNGSCQADTQKG. The span at 81-98 shows a compositional bias: basic and acidic residues; it reads EKPKPVKENPMKKLKEMS. Residues 177–525 are fatty acid alpha-dioxygenase; sequence TDSLINELWE…DGKFDDDDLV (349 aa). H276 contributes to the heme b binding site. Y454 is an active-site residue. Residue H457 coordinates heme b. An epoxy alcohol synthase region spans residues 732 to 1153; it reads RVNITSYGGA…VTMRVMWDDE (422 aa). C1086 lines the heme pocket.

This sequence in the N-terminal section; belongs to the peroxidase family. The protein in the C-terminal section; belongs to the cytochrome P450 family. In terms of assembly, homotetramer. Heme b serves as cofactor. It depends on heme as a cofactor.

It carries out the reaction (9Z)-octadecenoate + O2 = (8R)-hydroperoxy-(9Z)-octadecenoate. The enzyme catalyses (9Z)-octadecenoate + O2 = 10-hydroperoxy-(8E)-octadecenoate. It catalyses the reaction (9Z,12Z)-octadecadienoate + O2 = (8E,10R,12Z)-10-hydroperoxyoctadeca-8,12-dienoate. The catalysed reaction is (9Z,12Z,15Z)-octadecatrienoate + O2 = (10R)-hydroperoxy-(8E,12Z,15Z)-octadecatrienoate. It carries out the reaction (9Z,12Z,15Z)-octadecatrienoate + O2 = (8R)-hydroperoxy-(9Z,12Z,15Z)-octadecatrienoate. The enzyme catalyses (11Z,14Z)-eicosadienoate + O2 = 12-hydroperoxy-(10E,14Z)-eicosadienoate. It catalyses the reaction (11Z,14Z,17Z)-eicosatrienoate + O2 = 12-hydroperoxy-(10E,14Z,17Z)-eicosatrienoate. The catalysed reaction is (12R,13S)-epoxy-(9Z)-octadecenoate + O2 = (12R,13S)-epoxy-(10R)-hydroperoxy-(8E)-octadecenoate. It carries out the reaction (8E,10R,12Z)-10-hydroperoxyoctadeca-8,12-dienoate = (12S,13R)-epoxy-(10R)-hydroxy-(8E)-octadecenoate. The enzyme catalyses (10R)-hydroperoxy-(8E,12Z,15Z)-octadecatrienoate = 12,13-epoxy-(10R)-hydroxy-(8E,15Z)-octadecadienoate. It catalyses the reaction 12-hydroperoxy-(10E,14Z)-eicosadienoate = 10,11-epoxy-12-hydroxy-(14Z)-eicosenoate. The catalysed reaction is 12-hydroperoxy-(10E,14Z,17Z)-eicosatrienoate = 14,15-epoxy-12-hydroxy-(10E,17Z)-eicosadienoate. It carries out the reaction (13R)-hydroperoxy-(9Z,11E)-octadecadienoate = (12R,13R)-epoxy-(11S)-hydroxy-(9Z)-octadecenoate. The enzyme catalyses (13S)-hydroperoxy-(9Z,11E)-octadecadienoate = (12R,13R)-epoxy-(11S)-hydroxy-(9Z)-octadecenoate. It catalyses the reaction 12-hydroperoxy-(10E,14Z)-eicosadienoate = 14,15-epoxy-12-hydroxy-(10E)-eicosenoate. The catalysed reaction is 12-hydroperoxy-(10E,14Z,17Z)-eicosatrienoate = 10,11-epoxy-12-hydroxy-(14Z,17Z)-eicosadienoate. Functionally, bifunctional dioxygenase (DOX)-epoxy alcohol synthase (EAS) that converts linoleic acid (18:2n-6) sequentially to 10(R)-hydroperoxy-8(E),12(Z)-octadecadienoic acid (10R-HPODE) and 10R-HPODE further to 12 S(13R)-epoxy-10(R)-hydroxy-8(E)-octadecenoic acid as the end product. Oxygenation at C-10 occurs by retention of the pro-R hydrogen of C-8 of 18:2n-6, suggesting antarafacial hydrogen abstraction and oxygenation. The epoxy alcohol is formed from 10R-HPODE, likely by heterolytic cleavage of the dioxygen bond and subsequent intramolecular epoxidation of the 12(Z) double bond. The DOX domain is also able to oxygenate position C-8 of linoleic acid to produce 8(R)-hydroperoxy-8(E),12(Z)-octadecadienoic acid (8R-HPODE). Moreover, the DOX domain can oxygenate alpha-linolenic acid (18:3n-3) at C-8 or C-10 to produce respectively 8HOTrE and 10HOTrE, oleic acid (18:1n-9) at C-8 or C-10 to produce respectively 8-H(P)OME and 10-H(P)OME (with 8R stereoisomer to over 95%), eicosadienoic acid (20:2n-6) at C-10 or C-12 to produce respectively 10(11)-epoxy-12-hydroxy-14(Z)-eicosenoic acid and 14(15)-epoxy-12-hydroxy-10(E)-eicosenoic acid, as well as eicosatrienoic acid (20:3n-3) at C-10 or C-12 to produce respectively 10(11)-epoxy-12-hydroxy-14(Z),17(Z)-eicosadienoic acid and 14(15)-epoxy-12-hydroxy-14(Z),17(Z)-eicosadienoic acid. On the other side, the enzyme EAS domain can also catalyze the conversion of 10HOTrE into 12(13)-epoxy-10(R)-hydroxy-8(E),15(Z)-octadecadienoic acid, 13-R-HPODE into the stereoisomers of 12(13)-epoxy-11-hydroxy-9(Z)-octadecenoic acids (erythro/threo, 1:4), as well as 13S-HPODE into the stereoisomers of 12(13)-epoxy-11-hydroxy-9(Z)-octadecenoic acids (erythro/threo, 1:4) (EAS activity). Gamma-linolenic acid (18:3n-6) is not a substrate. This chain is Bifunctional dioxygenase (DOX)-epoxy alcohol synthase (EAS), found in Pyricularia oryzae (strain 70-15 / ATCC MYA-4617 / FGSC 8958) (Rice blast fungus).